Consider the following 425-residue polypeptide: Serine--tRNA ligase (425 aa).

230-232 (TSE) is an L-serine binding site. 261-263 (RKE) serves as a coordination point for ATP. Glu284 lines the L-serine pocket. 348 to 351 (EISS) provides a ligand contact to ATP. Ser385 is an L-serine binding site.

It belongs to the class-II aminoacyl-tRNA synthetase family. Type-1 seryl-tRNA synthetase subfamily. In terms of assembly, homodimer. The tRNA molecule binds across the dimer.

The protein localises to the cytoplasm. It carries out the reaction tRNA(Ser) + L-serine + ATP = L-seryl-tRNA(Ser) + AMP + diphosphate + H(+). The catalysed reaction is tRNA(Sec) + L-serine + ATP = L-seryl-tRNA(Sec) + AMP + diphosphate + H(+). It functions in the pathway aminoacyl-tRNA biosynthesis; selenocysteinyl-tRNA(Sec) biosynthesis; L-seryl-tRNA(Sec) from L-serine and tRNA(Sec): step 1/1. Catalyzes the attachment of serine to tRNA(Ser). Is also able to aminoacylate tRNA(Sec) with serine, to form the misacylated tRNA L-seryl-tRNA(Sec), which will be further converted into selenocysteinyl-tRNA(Sec). In Wolbachia pipientis wMel, this protein is Serine--tRNA ligase.